Consider the following 473-residue polypeptide: Ion-translocating oxidoreductase complex subunit C (473 aa).

4Fe-4S ferredoxin-type domains are found at residues 328-357 (KNES…QQLY) and 368-396 (TKKH…VKYF). Cysteine 337, cysteine 340, cysteine 343, cysteine 347, cysteine 376, cysteine 379, cysteine 382, and cysteine 386 together coordinate [4Fe-4S] cluster.

Belongs to the 4Fe4S bacterial-type ferredoxin family. RnfC subfamily. As to quaternary structure, the complex is composed of six subunits: RnfA, RnfB, RnfC, RnfD, RnfE and RnfG. It depends on [4Fe-4S] cluster as a cofactor.

Its subcellular location is the cell inner membrane. Part of a membrane-bound complex that couples electron transfer with translocation of ions across the membrane. This Buchnera aphidicola subsp. Acyrthosiphon pisum (strain APS) (Acyrthosiphon pisum symbiotic bacterium) protein is Ion-translocating oxidoreductase complex subunit C.